Here is a 565-residue protein sequence, read N- to C-terminus: Nephrocystin-1 (565 aa).

The span at 1–32 (GEEEDEEEEEEEESEEGGGEEEESEEEEEEKQ) shows a compositional bias: acidic residues. Disordered stretches follow at residues 1–46 (GEEE…KEYI) and 95–132 (VEPY…KQRT). A coiled-coil region spans residues 2–48 (EEEDEEEEEEEESEEGGGEEEESEEEEEEKQENESHHQATSKEYIAV). The residue at position 14 (S14) is a Phosphoserine. In terms of domain architecture, SH3 spans 40–100 (ATSKEYIAVG…PRTYVEPYNK (61 aa)). Positions 104–118 (QDTSEEEDSEEDVEV) are enriched in acidic residues. At Y182 the chain carries Phosphotyrosine; by FAK2. Y554 is subject to Phosphotyrosine; by SRC.

The protein belongs to the nephrocystin-1 family. In terms of assembly, interacts with Crk-associated substrate BCAR1, NPHP4, PTK2B/PYK2 and tensin. Interacts with INVS and NPHP3. Interacts with AHI1 and TNK2. Interacts with NPHP4 in a complex containing NPHP1, NPHP4 and RPGRIP1L/NPHP8. Interacts with IQCB1; the interaction likely requires additional interactors. Interacts with KIF7. Interacts with ANKS3. Interacts with SPATA7. Interacts with FLNA. In terms of tissue distribution, expressed in renal cells (at protein level).

The protein localises to the cell junction. It localises to the adherens junction. Its subcellular location is the cell projection. The protein resides in the cilium. It is found in the cytoplasm. The protein localises to the cytoskeleton. It localises to the cilium axoneme. Its subcellular location is the tight junction. Together with BCAR1 it may play a role in the control of epithelial cell polarity. Involved in the organization of apical junctions in kidney cells together with NPHP4 and RPGRIP1L/NPHP8. Does not seem to be strictly required for ciliogenesis. Seems to help to recruit PTK2B/PYK2 to cell matrix adhesions, thereby initiating phosphorylation of PTK2B/PYK2 and PTK2B/PYK2-dependent signaling. May play a role in the regulation of intraflagellar transport (IFT) during cilia assembly. Required for normal retina development. In connecting photoreceptor cilia influences the movement of some IFT proteins such as IFT88 and WDR19. Involved in spermatogenesis. In Canis lupus familiaris (Dog), this protein is Nephrocystin-1 (NPHP1).